We begin with the raw amino-acid sequence, 188 residues long: Calcium load-activated calcium channel (188 aa).

The Lumenal segment spans residues 1–4; sequence MSTM. The helical transmembrane segment at 5–32 threads the bilayer; sequence FADTLLIVFISVCTALLAEGITWVLVYR. Residues 32-89 adopt a coiled-coil conformation; the sequence is RTDKYKRLKAEVEKQSKKLEKKKETITESAGRQQKKKIERQEEKLKNNNRDLSMVRMK. Residues 33–86 are Cytoplasmic-facing; the sequence is TDKYKRLKAEVEKQSKKLEKKKETITESAGRQQKKKIERQEEKLKNNNRDLSMV. S60 is subject to Phosphoserine. The chain crosses the membrane as a helical span at residues 87–106; that stretch reads RMKSMFAIGFCFTALMGMFN. Residues 107 to 120 are Lumenal-facing; the sequence is SIFDGRVVAKLPFT. An intramembrane segment occupies 121–130; that stretch reads PLSYIQGLSH. The Lumenal segment spans residues 131 to 140; the sequence is RNLLGDDTTD. The helical transmembrane segment at 141-162 threads the bilayer; sequence CSFIFLYILCTMSIRQNIQKIL. Over 163-188 the chain is Cytoplasmic; sequence GLAPSRAATKQAGGFLGPPPPSGKFS. S188 bears the Phosphoserine mark.

This sequence belongs to the TMCO1 family. As to quaternary structure, homodimer and homotetramer. Homodimer under resting conditions; forms homotetramers following ER calcium overload. Component of the GET- and EMC-like (GEL) complex, composed of RAB5IF/OPTI and TMCO1. The GEL complex is part of the multi-pass translocon (MPT) complex, composed of three subcomplexes, the GEL complex (composed of RAB5IF/OPTI and TMCO1), the BOS complex (composed of NCLN/Nicalin, NOMO1 and TMEM147) and the PAT complex (composed of WDR83OS/Asterix and CCDC47). The MPT complex associates with the SEC61 complex.

Its subcellular location is the endoplasmic reticulum membrane. The protein resides in the golgi apparatus membrane. It localises to the mitochondrion membrane. It catalyses the reaction Ca(2+)(in) = Ca(2+)(out). Functionally, endoplasmic reticulum (ER) calcium-selective channel preventing intracellular Ca2(+) stores from overfilling and maintaining calcium homeostasis in the ER. In response to endoplasmic reticulum (ER) Ca2(+) overloading, assembles into a homotetramer, forming a functional calcium-selective channel facilitating Ca2(+) release. Mediates ER Ca2(+) homeostasis in osteoblasts and plays a key role in bone formation, via the CaMKII-HDAC4-RUNX2 signaling axis. Component of the multi-pass translocon (MPT) complex that mediates insertion of multi-pass membrane proteins into the lipid bilayer of membranes. The MPT complex takes over after the SEC61 complex: following membrane insertion of the first few transmembrane segments of proteins by the SEC61 complex, the MPT complex occludes the lateral gate of the SEC61 complex to promote insertion of subsequent transmembrane regions. Within the MPT complex, the GEL subcomplex may mediate insertion of transmembrane regions into the membrane. This is Calcium load-activated calcium channel from Bos taurus (Bovine).